The sequence spans 423 residues: MAPSIQSLSMIHDSQECIKPIPAFYCCYLLRSCVRHASLYIGSTPDPARRLAQHNGDRNGAAKRTLRENLRPWEMVAIVSGFTSRVAALQFEWAWQNTKVSRHADLDGNAIQELGVRICPRTGKGVKGTAKPRTSLTNILANLHLLLRSPYFSKWPVEVRFFSADVHRVWQVWLQRVDGLLNDGIRVVTDFALDGISEVERKELLAGAGRVGTLDVGYNSIKEYVEKSQFLLEDGERINCGVSHLSCLSSHFLKDKDSDSELIPREGTCPACYGKLEWLTMMKEISLRLRGQEEVNRLFRRRRQAGTPKGQGLKSVRGRGRGRGHSEDESDALQVSTGLDIVDLTPCSDDPWTIDCAIGELGGIAHRPGGESSGNDSDATITLEMETPPQRRRRNQNTRTQRLGLQKSATINLSDWDDAEVIE.

One can recognise a GIY-YIG domain in the interval 23–105 (AFYCCYLLRS…QNTKVSRHAD (83 aa)). Disordered regions lie at residues 300–334 (RRRR…DALQ) and 365–406 (AHRP…LGLQ).

It belongs to the SLX1 family. In terms of assembly, forms a heterodimer with SLX4. A divalent metal cation is required as a cofactor.

The protein localises to the nucleus. Its function is as follows. Catalytic subunit of the SLX1-SLX4 structure-specific endonuclease that resolves DNA secondary structures generated during DNA repair and recombination. Has endonuclease activity towards branched DNA substrates, introducing single-strand cuts in duplex DNA close to junctions with ss-DNA. The polypeptide is Structure-specific endonuclease subunit SLX1 (Paracoccidioides brasiliensis (strain Pb03)).